The sequence spans 332 residues: MEPVGRKRSRKAAKAQLEAQVTAAQGATKEGSGIASNFPGQPTMEPVGRKRSRKAAKAQLEAQVRAAPAKKHTGKDPVRDECEERNPFTETREEDVTDEHGEREPFAEKDEHTGIHTMKLEHIAADIKKGLAAKREMIKIDKAAYRKTKNTIERALKKKQLKRQKRDYRHTRKLLNVLKEYIAEKQKDDEAEEAEAAAAAAEAAAAAEAAAAAAEVIVVEDEEEEEKEEEEEKEEEEEEGEEEGGGEEGEEGGGGGEGEETEEEEEEEEEEEEEEQIKAFQEKQKRWQQPTGVRSWRLREMKPLLEQLLKAAKDTKDNYCIISSSEESELDN.

Residues 1 to 13 (MEPVGRKRSRKAA) are compositionally biased toward basic residues. Disordered regions lie at residues 1–114 (MEPV…EHTG) and 186–293 (QKDD…PTGV). Basic and acidic residues-rich tracts occupy residues 74–91 (GKDP…FTET) and 98–114 (DEHG…EHTG). Residues 196-217 (AAAAAAEAAAAAEAAAAAAEVI) are compositionally biased toward low complexity. A compositionally biased stretch (acidic residues) spans 218–275 (VVEDEEEEEKEEEEEKEEEEEEGEEEGGGEEGEEGGGGGEGEETEEEEEEEEEEEEEE). The span at 276–285 (QIKAFQEKQK) shows a compositional bias: basic and acidic residues.

It belongs to the XLR/SYCP3 family. Expressed exclusively in testis.

Its subcellular location is the nucleus. The protein resides in the nucleolus. The polypeptide is Protein FAM9A (Homo sapiens (Human)).